We begin with the raw amino-acid sequence, 362 residues long: Phosphoserine aminotransferase (362 aa).

Arg42 is an L-glutamate binding site. Pyridoxal 5'-phosphate is bound by residues 76–77 (AR), Trp102, Thr152, Asp172, and Gln195. The residue at position 196 (Lys196) is an N6-(pyridoxal phosphate)lysine. 237 to 238 (NT) contacts pyridoxal 5'-phosphate.

It belongs to the class-V pyridoxal-phosphate-dependent aminotransferase family. SerC subfamily. Homodimer. Requires pyridoxal 5'-phosphate as cofactor.

The protein resides in the cytoplasm. It catalyses the reaction O-phospho-L-serine + 2-oxoglutarate = 3-phosphooxypyruvate + L-glutamate. It carries out the reaction 4-(phosphooxy)-L-threonine + 2-oxoglutarate = (R)-3-hydroxy-2-oxo-4-phosphooxybutanoate + L-glutamate. It participates in amino-acid biosynthesis; L-serine biosynthesis; L-serine from 3-phospho-D-glycerate: step 2/3. It functions in the pathway cofactor biosynthesis; pyridoxine 5'-phosphate biosynthesis; pyridoxine 5'-phosphate from D-erythrose 4-phosphate: step 3/5. In terms of biological role, catalyzes the reversible conversion of 3-phosphohydroxypyruvate to phosphoserine and of 3-hydroxy-2-oxo-4-phosphonooxybutanoate to phosphohydroxythreonine. This chain is Phosphoserine aminotransferase, found in Haemophilus influenzae (strain ATCC 51907 / DSM 11121 / KW20 / Rd).